A 35-amino-acid chain; its full sequence is uncharacterized protein (35 aa).

The chain crosses the membrane as a helical span at residues 10–30 (LMITASFFAIFIIIVVSVLLL).

It is found in the membrane. This is an uncharacterized protein from Salmonella paratyphi A (strain ATCC 9150 / SARB42).